Here is a 226-residue protein sequence, read N- to C-terminus: Protein transport protein sec20 (226 aa).

At 1–189 the chain is on the cytoplasmic side; the sequence is MADVLNALEE…IKSLKLSDRS (189 aa). Positions 53 to 75 form a coiled coil; that stretch reads LRYEKAVQEYIRLNRRYRNKIAS. Serine 97 is modified (phosphoserine). The chain crosses the membrane as a helical; Anchor for type IV membrane protein span at residues 190–210; it reads DYFLVVSGFGFFIFVVVYLLF. Residues 211 to 226 lie on the Lumenal side of the membrane; that stretch reads KRIVWPILSMFLWFLR.

The protein belongs to the SEC20 family. Component of a SNARE complex consisting of ufe1, sec20, sec22 and use1. Interacts with tip20 through its cytoplasmic domain.

Its subcellular location is the endoplasmic reticulum membrane. Its function is as follows. SNARE required for targeting and fusion of Golgi-derived retrograde transport vesicles with the ER. This chain is Protein transport protein sec20, found in Schizosaccharomyces pombe (strain 972 / ATCC 24843) (Fission yeast).